A 346-amino-acid polypeptide reads, in one-letter code: PPE family protein PPE17 (346 aa).

The PPE stretch occupies residues 6–159; the sequence is FPPEFNSLNI…LYATMAAAAA (154 aa).

It belongs to the mycobacterial PPE family. As to quaternary structure, interacts with LRR motifs 15-20 of host Toll-like receptor 2 (TLR2).

It localises to the secreted. Its subcellular location is the cell wall. It is found in the cell surface. Functionally, induces pro-inflammatory responses. Induces host TLR1/2 heterodimerization, which causes an increased recruitment of IRAK1, MYD88, and protein kinase C epsilon (PRKCE) to the downstream TLR-signaling complex that translocates PRKCE into the nucleus in an IRAK1-dependent manner. PRKCE-mediated phosphorylation allowed the nuclear IRAK3 to be exported to the cytoplasm, leading to increased activation of ERK1/2, stabilization of MAPK phosphatase 1 (MKP1), and induction of TNF-alpha with concomitant down-regulation of MAP kinase p38. In terms of biological role, during M.tuberculosis and HIV-1 co-infection, can stimulate transcription from the long terminal repeat (LTR) of HIV-1 in monocyte/macrophage cells. Interaction with human TLR2 activates the NF-kappa-B transcription factor, which binds to the promoter region of the HIV-1 and induces HIV-1 gene expression. In Mycobacterium tuberculosis (strain ATCC 25618 / H37Rv), this protein is PPE family protein PPE17 (PPE17).